The sequence spans 347 residues: D-alanine--D-alanine ligase (347 aa).

The 202-residue stretch at 138-339 folds into the ATP-grasp domain; the sequence is KILCSHAGIP…YSQVIETILA (202 aa). Position 171 to 226 (171 to 226) interacts with ATP; that stretch reads SDRFTFPLFVKPVDAGSSFGCTFVDFFEQLPVAIEHALQHGKSAIVEPALDAPEVF. Residues Asp296, Glu308, and Asn310 each contribute to the Mg(2+) site.

It belongs to the D-alanine--D-alanine ligase family. Mg(2+) is required as a cofactor. It depends on Mn(2+) as a cofactor.

Its subcellular location is the cytoplasm. It catalyses the reaction 2 D-alanine + ATP = D-alanyl-D-alanine + ADP + phosphate + H(+). It functions in the pathway cell wall biogenesis; peptidoglycan biosynthesis. Functionally, cell wall formation. The sequence is that of D-alanine--D-alanine ligase from Tropheryma whipplei (strain Twist) (Whipple's bacillus).